Consider the following 382-residue polypeptide: Opsin-VA (382 aa).

Topologically, residues Met1–Thr35 are extracellular. The helical transmembrane segment at Leu36–Phe56 threads the bilayer. The Cytoplasmic portion of the chain corresponds to Arg57 to Tyr67. Residues Ile68–Phe88 traverse the membrane as a helical segment. At Leu89 to Cys103 the chain is on the extracellular side. A disulfide bridge links Cys103 with Cys180. Residues Val104–Leu124 form a helical membrane-spanning segment. At Ala125–Ala147 the chain is on the cytoplasmic side. A helical membrane pass occupies residues Leu148–Trp168. Residues Ser169–Thr193 lie on the Extracellular side of the membrane. Residues Phe194 to Tyr214 form a helical membrane-spanning segment. The Cytoplasmic segment spans residues Cys215–Met244. The chain crosses the membrane as a helical span at residues Val245 to Val265. Residues Val266–Ala279 lie on the Extracellular side of the membrane. Residues Ala280–Met300 form a helical membrane-spanning segment. Lys287 is modified (N6-(retinylidene)lysine). Residues Asn301 to Met382 are Cytoplasmic-facing. Positions Arg330–Ala346 are enriched in polar residues. The disordered stretch occupies residues Arg330–His371. Basic and acidic residues predominate over residues Ile349–Ser368.

Belongs to the G-protein coupled receptor 1 family. Opsin subfamily. In terms of tissue distribution, expressed in a subset of retinal horizontal cells as well as in retinal ganglion cells.

The protein localises to the membrane. The polypeptide is Opsin-VA (Rutilus rutilus (Roach)).